Reading from the N-terminus, the 381-residue chain is Queuine tRNA-ribosyltransferase (381 aa).

Aspartate 89 (proton acceptor) is an active-site residue. Substrate is bound by residues 89–93 (DSGGF), aspartate 143, glutamine 187, and glycine 214. The RNA binding stretch occupies residues 245-251 (GVGKPED). Aspartate 264 (nucleophile) is an active-site residue. The tract at residues 269–273 (TRNAR) is RNA binding; important for wobble base 34 recognition. Positions 302, 304, 307, and 333 each coordinate Zn(2+).

It belongs to the queuine tRNA-ribosyltransferase family. In terms of assembly, homodimer. Within each dimer, one monomer is responsible for RNA recognition and catalysis, while the other monomer binds to the replacement base PreQ1. Zn(2+) is required as a cofactor.

The catalysed reaction is 7-aminomethyl-7-carbaguanine + guanosine(34) in tRNA = 7-aminomethyl-7-carbaguanosine(34) in tRNA + guanine. It participates in tRNA modification; tRNA-queuosine biosynthesis. In terms of biological role, catalyzes the base-exchange of a guanine (G) residue with the queuine precursor 7-aminomethyl-7-deazaguanine (PreQ1) at position 34 (anticodon wobble position) in tRNAs with GU(N) anticodons (tRNA-Asp, -Asn, -His and -Tyr). Catalysis occurs through a double-displacement mechanism. The nucleophile active site attacks the C1' of nucleotide 34 to detach the guanine base from the RNA, forming a covalent enzyme-RNA intermediate. The proton acceptor active site deprotonates the incoming PreQ1, allowing a nucleophilic attack on the C1' of the ribose to form the product. After dissociation, two additional enzymatic reactions on the tRNA convert PreQ1 to queuine (Q), resulting in the hypermodified nucleoside queuosine (7-(((4,5-cis-dihydroxy-2-cyclopenten-1-yl)amino)methyl)-7-deazaguanosine). The chain is Queuine tRNA-ribosyltransferase from Pectobacterium atrosepticum (strain SCRI 1043 / ATCC BAA-672) (Erwinia carotovora subsp. atroseptica).